We begin with the raw amino-acid sequence, 49 residues long: uncharacterized protein (49 aa).

The first 22 residues, 1–22 (MVFLLFLSFVLSSIFLVPLVYM), serve as a signal peptide directing secretion.

Its subcellular location is the secreted. This is an uncharacterized protein from Dictyostelium discoideum (Social amoeba).